Consider the following 150-residue polypeptide: Large ribosomal subunit protein bL9 (150 aa).

This sequence belongs to the bacterial ribosomal protein bL9 family.

Binds to the 23S rRNA. This Neisseria meningitidis serogroup C (strain 053442) protein is Large ribosomal subunit protein bL9.